The primary structure comprises 315 residues: tRNA-dihydrouridine(16) synthase (315 aa).

FMN contacts are provided by residues 7–9 and Gln-68; that span reads PME. Catalysis depends on Cys-98, which acts as the Proton donor. FMN contacts are provided by residues Lys-139, 200-202, and 224-225; these read NGE and GR.

Belongs to the Dus family. DusC subfamily. It depends on FMN as a cofactor.

The catalysed reaction is 5,6-dihydrouridine(16) in tRNA + NADP(+) = uridine(16) in tRNA + NADPH + H(+). It carries out the reaction 5,6-dihydrouridine(16) in tRNA + NAD(+) = uridine(16) in tRNA + NADH + H(+). Its function is as follows. Catalyzes the synthesis of 5,6-dihydrouridine (D), a modified base found in the D-loop of most tRNAs, via the reduction of the C5-C6 double bond in target uridines. DusC specifically modifies U16 in tRNAs. The polypeptide is tRNA-dihydrouridine(16) synthase (Escherichia coli (strain K12)).